A 258-amino-acid polypeptide reads, in one-letter code: UPF0246 protein YaaA (258 aa).

Belongs to the UPF0246 family.

This chain is UPF0246 protein YaaA, found in Escherichia coli O17:K52:H18 (strain UMN026 / ExPEC).